Reading from the N-terminus, the 563-residue chain is Lengsin (563 aa).

Positions M1–A115 are disordered. The segment covering S26–K37 has biased composition (basic residues). Polar residues-rich tracts occupy residues A51–A62 and S105–A115. The GS beta-grasp domain maps to N137–G231. Residues P238 to I563 form the GS catalytic domain.

It belongs to the glutamine synthetase family. In terms of assembly, dodecamer. Interacts with BFSP2 and VIM. Expressed in lens.

Its function is as follows. May act as a component of the cytoskeleton or as a chaperone for the reorganization of intermediate filament proteins during terminal differentiation in the lens. Does not seem to have enzymatic activity. This chain is Lengsin (Lgsn), found in Mus musculus (Mouse).